A 443-amino-acid polypeptide reads, in one-letter code: Trigger factor (443 aa).

Residues 163 to 249 (KDAAIIDYQA…LKSLKEEILP (87 aa)) enclose the PPIase FKBP-type domain.

It belongs to the FKBP-type PPIase family. Tig subfamily.

The protein resides in the cytoplasm. The enzyme catalyses [protein]-peptidylproline (omega=180) = [protein]-peptidylproline (omega=0). Involved in protein export. Acts as a chaperone by maintaining the newly synthesized protein in an open conformation. Functions as a peptidyl-prolyl cis-trans isomerase. The sequence is that of Trigger factor from Desulfosudis oleivorans (strain DSM 6200 / JCM 39069 / Hxd3) (Desulfococcus oleovorans).